The sequence spans 365 residues: Zinc finger TRAF-type-containing protein 1-A (365 aa).

Residues 1 to 56 (MSEEREAPGPLASSSAGLGAEVGQEEVPGGAGPARLLLLPSDSDGPPKKRLRSEAE) form a disordered region. Residues 72–117 (CTVCLDLPKASVYQCTNGHLMCAGCFIHLLADSRLKEEQATCPNCR) form an RING-type; degenerate zinc finger. Residues 113–186 (CPNCRCEISK…PWEGPYHELT (74 aa)) form a TRAF-type zinc finger.

Belongs to the ZFTRAF1 family.

It localises to the cytoplasm. This chain is Zinc finger TRAF-type-containing protein 1-A, found in Xenopus laevis (African clawed frog).